Reading from the N-terminus, the 253-residue chain is Ribosome-inactivating protein saporin-7 (253 aa).

The active site involves Glu176.

The protein belongs to the ribosome-inactivating protein family. Type 1 RIP subfamily.

It catalyses the reaction Endohydrolysis of the N-glycosidic bond at one specific adenosine on the 28S rRNA.. Ribosome-inactivating protein of type 1, inhibits protein synthesis in animal cells. This chain is Ribosome-inactivating protein saporin-7 (SAP7), found in Saponaria officinalis (Common soapwort).